Here is a 436-residue protein sequence, read N- to C-terminus: Gamma-glutamyl phosphate reductase (436 aa).

This sequence belongs to the gamma-glutamyl phosphate reductase family.

It is found in the cytoplasm. It catalyses the reaction L-glutamate 5-semialdehyde + phosphate + NADP(+) = L-glutamyl 5-phosphate + NADPH + H(+). Its pathway is amino-acid biosynthesis; L-proline biosynthesis; L-glutamate 5-semialdehyde from L-glutamate: step 2/2. In terms of biological role, catalyzes the NADPH-dependent reduction of L-glutamate 5-phosphate into L-glutamate 5-semialdehyde and phosphate. The product spontaneously undergoes cyclization to form 1-pyrroline-5-carboxylate. This Salinibacter ruber (strain DSM 13855 / M31) protein is Gamma-glutamyl phosphate reductase.